We begin with the raw amino-acid sequence, 259 residues long: V-type proton ATPase subunit D (259 aa).

A disordered region spans residues 214–259 (KLKEQEAAQRALEGPPKEEAGGTHSENQPPRNLLAVEEDNLPVLFN).

The protein belongs to the V-ATPase D subunit family. In terms of assembly, V-ATPase is a heteromultimeric enzyme made up of two complexes: the ATP-hydrolytic V1 complex and the proton translocation V0 complex. The V1 complex consists of three catalytic AB heterodimers that form a heterohexamer, three peripheral stalks each consisting of EG heterodimers, one central rotor including subunits D and F, and the regulatory subunits C and H. The proton translocation complex V0 consists of the proton transport subunit a, a ring of proteolipid subunits c9c'', rotary subunit d, and The proton translocation complex V0 consists of the proton transport subunit a, a ring of proteolipid subunits c9c'', rotary subunit d, subunits e and f, and the accessory subunits vah-19/Ac45 and vah-20/PRR.

Its function is as follows. Subunit of the V1 complex of vacuolar(H+)-ATPase (V-ATPase), a multisubunit enzyme composed of a peripheral complex (V1) that hydrolyzes ATP and a membrane integral complex (V0) that translocates protons. V-ATPase is responsible for acidifying and maintaining the pH of intracellular compartments and in some cell types, is targeted to the plasma membrane, where it is responsible for acidifying the extracellular environment. The protein is V-type proton ATPase subunit D of Caenorhabditis briggsae.